Reading from the N-terminus, the 150-residue chain is 3-hydroxyacyl-[acyl-carrier-protein] dehydratase FabZ (150 aa).

His-47 is an active-site residue.

Belongs to the thioester dehydratase family. FabZ subfamily.

The protein resides in the cytoplasm. It carries out the reaction a (3R)-hydroxyacyl-[ACP] = a (2E)-enoyl-[ACP] + H2O. Its function is as follows. Involved in unsaturated fatty acids biosynthesis. Catalyzes the dehydration of short chain beta-hydroxyacyl-ACPs and long chain saturated and unsaturated beta-hydroxyacyl-ACPs. This is 3-hydroxyacyl-[acyl-carrier-protein] dehydratase FabZ from Verminephrobacter eiseniae (strain EF01-2).